A 343-amino-acid polypeptide reads, in one-letter code: Tetraacyldisaccharide 4'-kinase (343 aa).

Position 51-58 (51-58 (HGGGAGKT)) interacts with ATP.

The protein belongs to the LpxK family.

The enzyme catalyses a lipid A disaccharide + ATP = a lipid IVA + ADP + H(+). It functions in the pathway glycolipid biosynthesis; lipid IV(A) biosynthesis; lipid IV(A) from (3R)-3-hydroxytetradecanoyl-[acyl-carrier-protein] and UDP-N-acetyl-alpha-D-glucosamine: step 6/6. Its function is as follows. Transfers the gamma-phosphate of ATP to the 4'-position of a tetraacyldisaccharide 1-phosphate intermediate (termed DS-1-P) to form tetraacyldisaccharide 1,4'-bis-phosphate (lipid IVA). This chain is Tetraacyldisaccharide 4'-kinase, found in Rhodopseudomonas palustris (strain BisB18).